The primary structure comprises 353 residues: Photosystem II protein D1 (353 aa).

Position 2 is an N-acetylthreonine (threonine 2). Threonine 2 is modified (phosphothreonine). 3 consecutive transmembrane segments (helical) span residues 29–46 (YIGW…TATS), 118–133 (HFLL…EWEL), and 142–156 (WIAV…AATA). A chlorophyll a-binding site is contributed by histidine 118. Tyrosine 126 lines the pheophytin a pocket. Residues aspartate 170 and glutamate 189 each contribute to the [CaMn4O5] cluster site. Residues 197–218 (FHMLGVAGVFGGSLFSAMHGSL) form a helical membrane-spanning segment. Histidine 198 contributes to the chlorophyll a binding site. A quinone is bound by residues histidine 215 and 264 to 265 (SF). Histidine 215 contacts Fe cation. Histidine 272 provides a ligand contact to Fe cation. The helical transmembrane segment at 274-288 (FLAAWPVVGIWFTAL) threads the bilayer. [CaMn4O5] cluster-binding residues include histidine 332, glutamate 333, aspartate 342, and alanine 344. Positions 345-353 (ALEVPSING) are excised as a propeptide.

It belongs to the reaction center PufL/M/PsbA/D family. In terms of assembly, PSII is composed of 1 copy each of membrane proteins PsbA, PsbB, PsbC, PsbD, PsbE, PsbF, PsbH, PsbI, PsbJ, PsbK, PsbL, PsbM, PsbT, PsbX, PsbY, PsbZ, Psb30/Ycf12, at least 3 peripheral proteins of the oxygen-evolving complex and a large number of cofactors. It forms dimeric complexes. The D1/D2 heterodimer binds P680, chlorophylls that are the primary electron donor of PSII, and subsequent electron acceptors. It shares a non-heme iron and each subunit binds pheophytin, quinone, additional chlorophylls, carotenoids and lipids. D1 provides most of the ligands for the Mn4-Ca-O5 cluster of the oxygen-evolving complex (OEC). There is also a Cl(-1) ion associated with D1 and D2, which is required for oxygen evolution. The PSII complex binds additional chlorophylls, carotenoids and specific lipids. is required as a cofactor. Tyr-161 forms a radical intermediate that is referred to as redox-active TyrZ, YZ or Y-Z. Post-translationally, C-terminally processed by CTPA; processing is essential to allow assembly of the oxygen-evolving complex and thus photosynthetic growth.

It is found in the plastid. The protein localises to the chloroplast thylakoid membrane. The enzyme catalyses 2 a plastoquinone + 4 hnu + 2 H2O = 2 a plastoquinol + O2. Photosystem II (PSII) is a light-driven water:plastoquinone oxidoreductase that uses light energy to abstract electrons from H(2)O, generating O(2) and a proton gradient subsequently used for ATP formation. It consists of a core antenna complex that captures photons, and an electron transfer chain that converts photonic excitation into a charge separation. The D1/D2 (PsbA/PsbD) reaction center heterodimer binds P680, the primary electron donor of PSII as well as several subsequent electron acceptors. The protein is Photosystem II protein D1 of Agrostis stolonifera (Creeping bentgrass).